A 425-amino-acid polypeptide reads, in one-letter code: Inner membrane protein YqcE (425 aa).

Topologically, residues 1–8 are cytoplasmic; it reads MQHNSYRR. A helical membrane pass occupies residues 9-29; sequence WITLAIISFSGGVSFDLAYLR. Over 30–48 the chain is Periplasmic; it reads YIYQIPMAKFMGFSNTEIG. Residues 49 to 69 form a helical membrane-spanning segment; the sequence is LIMSTFGIAAIILYAPSGVIA. Topologically, residues 70–75 are cytoplasmic; that stretch reads DKFSHR. The next 2 membrane-spanning stretches (helical) occupy residues 76–96 and 97–117; these read KMITSAMIITGLLGLLMATYP and PLWVMLCIQIAFAITTILMLW. The Cytoplasmic segment spans residues 118-138; that stretch reads SVSIKAASLLGDHSEQGKIMG. Residues 139-159 traverse the membrane as a helical segment; it reads WMEGLRGVGVMSLAVFTMWVF. The Periplasmic segment spans residues 160 to 171; sequence SRFAPDDSTSLK. The chain crosses the membrane as a helical span at residues 172-192; that stretch reads TVIIIYSVVYILLGILCWFFV. Over 193–219 the chain is Cytoplasmic; the sequence is SDNNNLRSANNEEKQSFQLSDILAVLR. Residues 220–240 traverse the membrane as a helical segment; sequence ISTTWYCSMVIFGVFTIYAIL. Residues 241-259 lie on the Periplasmic side of the membrane; the sequence is SYSTNYLTEMYGMSLVAAS. A helical transmembrane segment spans residues 260-280; sequence YMGIVINKIFRALCGPLGGII. Residues 281–291 are Cytoplasmic-facing; it reads TTYSKVKSPTR. Residues 292–312 traverse the membrane as a helical segment; that stretch reads VIQILSVLGLLTLTALLVTNS. Residue Asn313 is a topological domain, periplasmic. The chain crosses the membrane as a helical span at residues 314–334; sequence PQSVAMGIGLILLLGFTCYAS. The Cytoplasmic portion of the chain corresponds to 335-354; sequence RGLYWACPGEARTPSYIMGT. Residues 355 to 375 form a helical membrane-spanning segment; it reads TVGICSVIGFLPDVFVYPIIG. Topologically, residues 376–388 are periplasmic; sequence HWQDTLPAAEAYR. The chain crosses the membrane as a helical span at residues 389–409; sequence NMWLMGMAALGMVIVFTFLLF. The Cytoplasmic segment spans residues 410–425; sequence QKIRTADSAPAMASSK.

This sequence to E.coli YihN.

Its subcellular location is the cell inner membrane. The sequence is that of Inner membrane protein YqcE (yqcE) from Escherichia coli (strain K12).